A 125-amino-acid chain; its full sequence is Large ribosomal subunit protein uL22 (125 aa).

It belongs to the universal ribosomal protein uL22 family. As to quaternary structure, part of the 50S ribosomal subunit.

Functionally, this protein binds specifically to 23S rRNA; its binding is stimulated by other ribosomal proteins, e.g. L4, L17, and L20. It is important during the early stages of 50S assembly. It makes multiple contacts with different domains of the 23S rRNA in the assembled 50S subunit and ribosome. Its function is as follows. The globular domain of the protein is located near the polypeptide exit tunnel on the outside of the subunit, while an extended beta-hairpin is found that lines the wall of the exit tunnel in the center of the 70S ribosome. This Erythrobacter litoralis (strain HTCC2594) protein is Large ribosomal subunit protein uL22.